Consider the following 671-residue polypeptide: MEPIEQQLTELRTTLRHHEYLYHVMDAPEIPDAEYDRLMRELRELEAQRPDLITPDSPTQRVGAAPLTAFNQIRHEVPMLSLDNVFDEESFLAFNKRVQDRLKSTENVIWCCELKLDGLAVSILYENGVLVSAATRGDGTTGEDITSNVRTIRAIPLKLHGDNIPARLEVRGEVFLPQAGFEKINEDARRTGGKVFANPRNAAAGSLRQLDPRITAKRPLTFFCYGVGILEGGELPDTHLGRLLQFKAWGLPVSDRVTLCDSPQAVLDFYHNVEKDRPTLGFDIDGVVIKVNSLALQEQLGFVARAPRWAVAFKFPAQEQMTFVRDVEFQVGRTGAITPVARLEPVQVAGVLVSNATLHNADEIERLGLRIGDKVVIRRAGDVIPQVVNVVLSERPEETRPIVFPTHCPVCGSDVERVEGEAVTRCTGGLICGAQRKESLKHFVSRRAMDVDGMGDKIIDQLVEREYVHTPADLFRLTAGKLTGLDRMGPKSAQNVVNALEKAKATTFARFLYALGIREVGEATAAGLAAYFGTLEALQAATIDELQKVPDVGIVVATHVFNFFAEESNRDVIVQLLAEGVHWPAPVVINVQEIDSPFAGKTVVLTGSLSQMSRDDAKARLVALGAKVAGSVSKKTDLVIAGEAAGSKLAKAQELGINVIDEAEMIRLLGA.

Residues Asp32–Asp36, Ser81–Leu82, and Glu113 each bind NAD(+). Lys115 functions as the N6-AMP-lysine intermediate in the catalytic mechanism. NAD(+) is bound by residues Arg136, Glu173, Lys290, and Lys314. Residues Cys408, Cys411, Cys426, and Cys432 each contribute to the Zn(2+) site. A BRCT domain is found at Glu593–Ala671.

The protein belongs to the NAD-dependent DNA ligase family. LigA subfamily. Mg(2+) is required as a cofactor. The cofactor is Mn(2+).

The enzyme catalyses NAD(+) + (deoxyribonucleotide)n-3'-hydroxyl + 5'-phospho-(deoxyribonucleotide)m = (deoxyribonucleotide)n+m + AMP + beta-nicotinamide D-nucleotide.. In terms of biological role, DNA ligase that catalyzes the formation of phosphodiester linkages between 5'-phosphoryl and 3'-hydroxyl groups in double-stranded DNA using NAD as a coenzyme and as the energy source for the reaction. It is essential for DNA replication and repair of damaged DNA. The polypeptide is DNA ligase (Salmonella paratyphi A (strain ATCC 9150 / SARB42)).